The chain runs to 157 residues: Putative low molecular weight protein-tyrosine-phosphatase slr0328 (157 aa).

Catalysis depends on Cys-7, which acts as the Nucleophile. Arg-13 is an active-site residue. Residue Asp-124 is the Proton donor of the active site.

The protein belongs to the low molecular weight phosphotyrosine protein phosphatase family.

The enzyme catalyses O-phospho-L-tyrosyl-[protein] + H2O = L-tyrosyl-[protein] + phosphate. The chain is Putative low molecular weight protein-tyrosine-phosphatase slr0328 from Synechocystis sp. (strain ATCC 27184 / PCC 6803 / Kazusa).